We begin with the raw amino-acid sequence, 199 residues long: Early activation antigen CD69 (199 aa).

Residues 1–29 are disordered; it reads MSSENCFVAENSSLHPESGQENDATSPHF. The Cytoplasmic segment spans residues 1-40; sequence MSSENCFVAENSSLHPESGQENDATSPHFSTRHEGSFQVP. The chain crosses the membrane as a helical; Signal-anchor for type II membrane protein span at residues 41–61; the sequence is VLCAVMNVVFITILIIALIAL. Residues 62–199 are Extracellular-facing; the sequence is SVGQYNCPGQ…LYWICNKPYK (138 aa). Disulfide bonds link Cys85–Cys96, Cys113–Cys194, and Cys173–Cys186. Positions 92 to 195 constitute a C-type lectin domain; sequence YQRKCYFIST…CEKNLYWICN (104 aa). N-linked (GlcNAc...) asparagine glycosylation is present at Asn166.

As to quaternary structure, homodimer; disulfide-linked. Interacts with S100A8 and S100A9. Interacts with galactin-1/LGALS1. Interacts with S1PR1; this interaction mediates S1PR1 degradation. In terms of processing, constitutive Ser/Thr phosphorylation in both mature thymocytes and activated T-lymphocytes. As to expression, expressed on the surface of activated T-cells, B-cells, natural killer cells, neutrophils, eosinophils, epidermal Langerhans cells and platelets.

The protein localises to the cell membrane. In terms of biological role, transmembrane protein expressed mainly on T-cells resident in mucosa that plays an essential role in immune cell homeostasis. Rapidly expressed on the surface of platelets, T-lymphocytes and NK cells upon activation by various stimuli, such as antigen recognition or cytokine signaling, stimulates different signaling pathways in different cell types. Negatively regulates Th17 cell differentiation through its carbohydrate dependent interaction with galectin-1/LGALS1 present on immature dendritic cells. Association of CD69 cytoplasmic tail with the JAK3/STAT5 signaling pathway regulates the transcription of RORgamma/RORC and, consequently, differentiation toward the Th17 lineage. Also acts via the S100A8/S100A9 complex present on peripheral blood mononuclear cells to promote the conversion of naive CD4 T-cells into regulatory T-cells. Acts as an oxidized low-density lipoprotein (oxLDL) receptor in CD4 T-lymphocytes and negatively regulates the inflammatory response by inducing the expression of PDCD1 through the activation of NFAT. Participates in adipose tissue-derived mesenchymal stem cells (ASCs)-mediated protection against P.aeruginosa infection. Mechanistically, specifically recognizes P.aeruginosa to promote ERK1 activation, followed by granulocyte-macrophage colony-stimulating factor (GM-CSF) and other inflammatory cytokines secretion. In eosinophils, induces IL-10 production through the ERK1/2 pathway. Negatively regulates the chemotactic responses of effector lymphocytes and dendritic cells (DCs) to sphingosine 1 phosphate/S1P by acting as a S1PR1 receptor agonist and facilitating the internalization and degradation of the receptor. The sequence is that of Early activation antigen CD69 (CD69) from Homo sapiens (Human).